Reading from the N-terminus, the 183-residue chain is MSVVVGGVEYSLNNWARYEIKRRAAELESVNYYPHCEYVMPEDIVVSILGSKPNCPFLEALKRFHDFLKKRRVIFKGEYLVIPWMGAQDVADMIHHVENRINLDHLEDLAHMLKLITYHRSFDTCINQSFEQLYAFKFPDANIETHELKHIRQLEKKMYGYILRLEKLQTVLTFYIEFLLKQV.

Belongs to the asfivirus S183L family.

This is an uncharacterized protein from African swine fever virus (isolate Warthog/Namibia/Wart80/1980) (ASFV).